Reading from the N-terminus, the 138-residue chain is Large ribosomal subunit protein uL16 (138 aa).

Residues 1-16 (MLIPRRVKHRKQHHPG) are compositionally biased toward basic residues. Positions 1-24 (MLIPRRVKHRKQHHPGRSGAATGG) are disordered.

This sequence belongs to the universal ribosomal protein uL16 family. As to quaternary structure, part of the 50S ribosomal subunit.

In terms of biological role, binds 23S rRNA and is also seen to make contacts with the A and possibly P site tRNAs. This is Large ribosomal subunit protein uL16 from Paenarthrobacter aurescens (strain TC1).